Here is a 414-residue protein sequence, read N- to C-terminus: Esterase FrsA (414 aa).

It belongs to the FrsA family.

It carries out the reaction a carboxylic ester + H2O = an alcohol + a carboxylate + H(+). Functionally, catalyzes the hydrolysis of esters. The protein is Esterase FrsA of Escherichia coli O45:K1 (strain S88 / ExPEC).